A 267-amino-acid chain; its full sequence is 4-hydroxy-tetrahydrodipicolinate reductase (267 aa).

NAD(+) contacts are provided by residues 8-13 (GAAGRM) and Glu-34. Arg-35 is a binding site for NADP(+). Residues 98 to 100 (GST) and 122 to 125 (APNM) each bind NAD(+). The Proton donor/acceptor role is filled by His-155. His-156 is a binding site for (S)-2,3,4,5-tetrahydrodipicolinate. The active-site Proton donor is the Lys-159. 165-166 (GT) lines the (S)-2,3,4,5-tetrahydrodipicolinate pocket.

This sequence belongs to the DapB family.

It is found in the cytoplasm. It catalyses the reaction (S)-2,3,4,5-tetrahydrodipicolinate + NAD(+) + H2O = (2S,4S)-4-hydroxy-2,3,4,5-tetrahydrodipicolinate + NADH + H(+). The enzyme catalyses (S)-2,3,4,5-tetrahydrodipicolinate + NADP(+) + H2O = (2S,4S)-4-hydroxy-2,3,4,5-tetrahydrodipicolinate + NADPH + H(+). Its pathway is amino-acid biosynthesis; L-lysine biosynthesis via DAP pathway; (S)-tetrahydrodipicolinate from L-aspartate: step 4/4. Its function is as follows. Catalyzes the conversion of 4-hydroxy-tetrahydrodipicolinate (HTPA) to tetrahydrodipicolinate. In Citrifermentans bemidjiense (strain ATCC BAA-1014 / DSM 16622 / JCM 12645 / Bem) (Geobacter bemidjiensis), this protein is 4-hydroxy-tetrahydrodipicolinate reductase.